The sequence spans 84 residues: uncharacterized protein (84 aa).

This sequence belongs to the chlamydial CPn_0711/CT_665/TC_0036 family.

This is an uncharacterized protein from Chlamydia muridarum (strain MoPn / Nigg).